We begin with the raw amino-acid sequence, 677 residues long: WD repeat-containing protein 48 (677 aa).

Tyr28 is modified (phosphotyrosine). WD repeat units lie at residues 28 to 67 (YNRN…QDPY), 73 to 112 (HHTD…CMST), 115 to 154 (THKD…ALTA), 166 to 205 (GNKD…KLMK), 208 to 247 (GHTD…CIAT), 250 to 289 (VHDE…IRVL), 292 to 334 (EEKA…NFRA), and 358 to 452 (KGGA…GFSS). Position 214 is an N6-acetyllysine (Lys214). Position 578 is an N6-acetyllysine (Lys578). The interval 607-628 (LDNESQTTSSSNNEKPGEQEKE) is disordered. A compositionally biased stretch (low complexity) spans 609–620 (NESQTTSSSNNE). Thr613 is modified (phosphothreonine).

It belongs to the WD repeat WDR48 family. Interacts with USP46. Interacts with USP1. Interacts with USP12. Component of the USP12-WDR20-WDR48 deubiquitinating complex. Component of the USP12-DMWD-WDR48 deubiquitinating complex. Interacts with PHLPP1. Interacts with RAD51AP1; the interaction is direct and promotes formation of a trimeric complex with RAD51 via RAD51AP1. Interacts with ATAD5; the interaction regulates USP1-mediated PCNA deubiquitination. Interacts with RAD51; the interaction is enhanced under replication stress. Interacts with ITCH; the interaction is more efficient when both USP12 and WDR48/UAF1 are involved and may facilitate recruitment of the USP12 deubiquitinating complex to Notch.

The protein resides in the nucleus. The protein localises to the cytoplasm. It is found in the lysosome. Its subcellular location is the late endosome. Regulator of deubiquitinating complexes, which acts as a strong activator of USP1, USP12 and USP46. Enhances the USP1-mediated deubiquitination of FANCD2; USP1 being almost inactive by itself. Activates deubiquitination by increasing the catalytic turnover without increasing the affinity of deubiquitinating enzymes for the substrate. Also activates deubiquitinating activity of complexes containing USP12. Docks at the distal end of the USP12 fingers domain and induces a cascade of structural changes leading to the activation of the enzyme. Together with RAD51AP1, promotes DNA repair by stimulating RAD51-mediated homologous recombination. Binds single-stranded DNA (ssDNA) and double-stranded DNA (dsDNA). DNA-binding is required both for USP1-mediated deubiquitination of FANCD2 and stimulation of RAD51-mediated homologous recombination: both WDR48/UAF1 and RAD51AP1 have coordinated role in DNA-binding during these processes. Together with ATAD5 and by regulating USP1 activity, has a role in PCNA-mediated translesion synthesis (TLS) by deubiquitinating monoubiquitinated PCNA. Together with ATAD5, has a role in recruiting RAD51 to stalled forks during replication stress. In Pongo abelii (Sumatran orangutan), this protein is WD repeat-containing protein 48 (WDR48).